The primary structure comprises 161 residues: Phosphopantetheine adenylyltransferase (161 aa).

Residue Ser9 coordinates substrate. ATP-binding positions include 9–10 (SF) and His17. Residues Lys41, Thr74, and Arg88 each contribute to the substrate site. ATP-binding positions include 89–91 (GVR), Glu99, and 124–130 (NSFVASS).

Belongs to the bacterial CoaD family. Homohexamer. Requires Mg(2+) as cofactor.

The protein resides in the cytoplasm. The enzyme catalyses (R)-4'-phosphopantetheine + ATP + H(+) = 3'-dephospho-CoA + diphosphate. The protein operates within cofactor biosynthesis; coenzyme A biosynthesis; CoA from (R)-pantothenate: step 4/5. Functionally, reversibly transfers an adenylyl group from ATP to 4'-phosphopantetheine, yielding dephospho-CoA (dPCoA) and pyrophosphate. The protein is Phosphopantetheine adenylyltransferase of Lactobacillus acidophilus (strain ATCC 700396 / NCK56 / N2 / NCFM).